Here is a 266-residue protein sequence, read N- to C-terminus: Segregation and condensation protein A (266 aa).

Belongs to the ScpA family. In terms of assembly, component of a cohesin-like complex composed of ScpA, ScpB and the Smc homodimer, in which ScpA and ScpB bind to the head domain of Smc. The presence of the three proteins is required for the association of the complex with DNA.

The protein resides in the cytoplasm. Participates in chromosomal partition during cell division. May act via the formation of a condensin-like complex containing Smc and ScpB that pull DNA away from mid-cell into both cell halves. The polypeptide is Segregation and condensation protein A (Coxiella burnetii (strain RSA 493 / Nine Mile phase I)).